The following is a 373-amino-acid chain: 3-isopropylmalate dehydrogenase (373 aa).

82 to 93 (GPKWGTGALRPE) contacts NAD(+). Substrate is bound by residues R100, R110, R139, and D231. Residues D231, D256, and D260 each coordinate Mg(2+). NAD(+) is bound at residue 295–306 (GSAPDLPANKVN).

It belongs to the isocitrate and isopropylmalate dehydrogenases family. As to quaternary structure, homodimer. It depends on Mg(2+) as a cofactor. Mn(2+) is required as a cofactor.

It localises to the cytoplasm. The enzyme catalyses (2R,3S)-3-isopropylmalate + NAD(+) = 4-methyl-2-oxopentanoate + CO2 + NADH. Its pathway is amino-acid biosynthesis; L-leucine biosynthesis; L-leucine from 3-methyl-2-oxobutanoate: step 3/4. Functionally, catalyzes the oxidation of 3-carboxy-2-hydroxy-4-methylpentanoate (3-isopropylmalate) to 3-carboxy-4-methyl-2-oxopentanoate. The product decarboxylates to 4-methyl-2 oxopentanoate. The polypeptide is 3-isopropylmalate dehydrogenase (LEU2) (Candida maltosa (Yeast)).